We begin with the raw amino-acid sequence, 71 residues long: ATP synthase subunit c (71 aa).

2 helical membrane passes run 5-25 and 47-67; these read GAAI…AIIV and FIGV…GFLI.

It belongs to the ATPase C chain family. F-type ATPases have 2 components, F(1) - the catalytic core - and F(0) - the membrane proton channel. F(1) has five subunits: alpha(3), beta(3), gamma(1), delta(1), epsilon(1). F(0) has three main subunits: a(1), b(2) and c(10-14). The alpha and beta chains form an alternating ring which encloses part of the gamma chain. F(1) is attached to F(0) by a central stalk formed by the gamma and epsilon chains, while a peripheral stalk is formed by the delta and b chains.

The protein localises to the cell membrane. In terms of biological role, f(1)F(0) ATP synthase produces ATP from ADP in the presence of a proton or sodium gradient. F-type ATPases consist of two structural domains, F(1) containing the extramembraneous catalytic core and F(0) containing the membrane proton channel, linked together by a central stalk and a peripheral stalk. During catalysis, ATP synthesis in the catalytic domain of F(1) is coupled via a rotary mechanism of the central stalk subunits to proton translocation. Key component of the F(0) channel; it plays a direct role in translocation across the membrane. A homomeric c-ring of between 10-14 subunits forms the central stalk rotor element with the F(1) delta and epsilon subunits. This is ATP synthase subunit c from Alkalihalobacillus alcalophilus (Bacillus alcalophilus).